Reading from the N-terminus, the 132-residue chain is Small ribosomal subunit protein uS8 (132 aa).

The protein belongs to the universal ribosomal protein uS8 family. In terms of assembly, part of the 30S ribosomal subunit. Contacts proteins S5 and S12.

Functionally, one of the primary rRNA binding proteins, it binds directly to 16S rRNA central domain where it helps coordinate assembly of the platform of the 30S subunit. In Rhodococcus jostii (strain RHA1), this protein is Small ribosomal subunit protein uS8.